A 367-amino-acid polypeptide reads, in one-letter code: Queuine tRNA-ribosyltransferase (367 aa).

Asp-92 (proton acceptor) is an active-site residue. Substrate is bound by residues 92-96 (DSGGF), Asp-146, Gln-188, and Gly-215. An RNA binding region spans residues 246–252 (GVGTPKD). The active-site Nucleophile is Asp-265. Positions 303, 305, 308, and 334 each coordinate Zn(2+).

It belongs to the queuine tRNA-ribosyltransferase family. In terms of assembly, homodimer. Within each dimer, one monomer is responsible for RNA recognition and catalysis, while the other monomer binds to the replacement base PreQ1. The cofactor is Zn(2+).

It catalyses the reaction 7-aminomethyl-7-carbaguanine + guanosine(34) in tRNA = 7-aminomethyl-7-carbaguanosine(34) in tRNA + guanine. The protein operates within tRNA modification; tRNA-queuosine biosynthesis. In terms of biological role, catalyzes the base-exchange of a guanine (G) residue with the queuine precursor 7-aminomethyl-7-deazaguanine (PreQ1) at position 34 (anticodon wobble position) in tRNAs with GU(N) anticodons (tRNA-Asp, -Asn, -His and -Tyr). Catalysis occurs through a double-displacement mechanism. The nucleophile active site attacks the C1' of nucleotide 34 to detach the guanine base from the RNA, forming a covalent enzyme-RNA intermediate. The proton acceptor active site deprotonates the incoming PreQ1, allowing a nucleophilic attack on the C1' of the ribose to form the product. After dissociation, two additional enzymatic reactions on the tRNA convert PreQ1 to queuine (Q), resulting in the hypermodified nucleoside queuosine (7-(((4,5-cis-dihydroxy-2-cyclopenten-1-yl)amino)methyl)-7-deazaguanosine). This chain is Queuine tRNA-ribosyltransferase, found in Francisella tularensis subsp. holarctica (strain FTNF002-00 / FTA).